Reading from the N-terminus, the 245-residue chain is MITHILLDIEGTTCPTSFVSDTLFPYADTHLEGFLNEHIENNEVQSLIDEAWHEWQADEDPSSKDLLSKAFRENSSEIENICSYLHHLITIDRKSSALKDLQGRIWREGYEKGDISSSLYPETIEVLNKLKQQDYILAVYSSGSISAQKLLYRHTTNGDQTALFSHWFDTRTGNKKESKSYSDISIAMNIPVEKVMFVSDSCAECNAAKKAGMSVLFSLREGNPEQDPHDHQPIKDLRCLFDYLL.

Belongs to the HAD-like hydrolase superfamily. MasA/MtnC family. As to quaternary structure, monomer. The cofactor is Mg(2+).

It carries out the reaction 5-methylsulfanyl-2,3-dioxopentyl phosphate + H2O = 1,2-dihydroxy-5-(methylsulfanyl)pent-1-en-3-one + phosphate. Its pathway is amino-acid biosynthesis; L-methionine biosynthesis via salvage pathway; L-methionine from S-methyl-5-thio-alpha-D-ribose 1-phosphate: step 3/6. The protein operates within amino-acid biosynthesis; L-methionine biosynthesis via salvage pathway; L-methionine from S-methyl-5-thio-alpha-D-ribose 1-phosphate: step 4/6. Functionally, bifunctional enzyme that catalyzes the enolization of 2,3-diketo-5-methylthiopentyl-1-phosphate (DK-MTP-1-P) into the intermediate 2-hydroxy-3-keto-5-methylthiopentenyl-1-phosphate (HK-MTPenyl-1-P), which is then dephosphorylated to form the acireductone 1,2-dihydroxy-3-keto-5-methylthiopentene (DHK-MTPene). In Prochlorococcus marinus (strain MIT 9313), this protein is Enolase-phosphatase E1.